The primary structure comprises 154 residues: Small ribosomal subunit protein uS19B (154 aa).

Residue Ser63 is modified to Phosphoserine.

Belongs to the universal ribosomal protein uS19 family. In terms of assembly, component of the small ribosomal subunit (SSU). Mature yeast ribosomes consist of a small (40S) and a large (60S) subunit. The 40S small subunit contains 1 molecule of ribosomal RNA (18S rRNA) and at least 33 different proteins. The large 60S subunit contains 3 rRNA molecules (25S, 5.8S and 5S rRNA) and at least 46 different proteins.

The protein resides in the cytoplasm. The protein localises to the nucleus. It is found in the nucleolus. Functionally, component of the ribosome, a large ribonucleoprotein complex responsible for the synthesis of proteins in the cell. The small ribosomal subunit (SSU) binds messenger RNAs (mRNAs) and translates the encoded message by selecting cognate aminoacyl-transfer RNA (tRNA) molecules. The large subunit (LSU) contains the ribosomal catalytic site termed the peptidyl transferase center (PTC), which catalyzes the formation of peptide bonds, thereby polymerizing the amino acids delivered by tRNAs into a polypeptide chain. The nascent polypeptides leave the ribosome through a tunnel in the LSU and interact with protein factors that function in enzymatic processing, targeting, and the membrane insertion of nascent chains at the exit of the ribosomal tunnel. uS19 is involved in the nuclear export of the small ribosomal subunit precursor. Has a role in the late stage of the assembly of pre-40S particles within the nucleus and controls their export to the cytoplasm. This chain is Small ribosomal subunit protein uS19B (rps1502), found in Schizosaccharomyces pombe (strain 972 / ATCC 24843) (Fission yeast).